We begin with the raw amino-acid sequence, 55 residues long: Large ribosomal subunit protein bL33 (55 aa).

The protein belongs to the bacterial ribosomal protein bL33 family.

This is Large ribosomal subunit protein bL33 from Aromatoleum aromaticum (strain DSM 19018 / LMG 30748 / EbN1) (Azoarcus sp. (strain EbN1)).